The following is a 276-amino-acid chain: SKA complex subunit 1 homolog (276 aa).

Residues 48 to 78 (VDVSLTAMEAQLQAVRRRLQEEREAFPKAKK) adopt a coiled-coil conformation.

The protein belongs to the SKA1 family.

This Oryza sativa subsp. japonica (Rice) protein is SKA complex subunit 1 homolog.